Consider the following 1347-residue polypeptide: DExH-box ATP-dependent RNA helicase DExH11 (1347 aa).

Positions 263–291 (ELEGDDHTAGSESPKAEAEPDAKASISNE) are disordered. Positions 267–284 (DDHTAGSESPKAEAEPDA) are enriched in basic and acidic residues. One can recognise a Helicase ATP-binding domain in the interval 369-524 (ICCLEKGESV…WIGRTKQKEI (156 aa)). 382–389 (AHTSAGKT) is a binding site for ATP. The DEVH box motif lies at 472 to 475 (DEVH). The interval 566 to 625 (SQKKKNSNAVSVAPKQQMGSSAHQDGSKSQKHEAHSRGKQNKHSSVKDVGKSSYSGNSQN) is disordered. Over residues 590 to 601 (DGSKSQKHEAHS) the composition is skewed to basic and acidic residues. The Helicase C-terminal domain maps to 673-838 (DLTSSSEKSE…LTYIMILHLL (166 aa)).

This sequence belongs to the DExH box helicase family. SKI2 subfamily. As to quaternary structure, component of the cytoplasmic SKI complex, which consists of SKI2, SKI3 and VIP3/SKI8. Expressed in vascular tissues of leaves and roots of young plants.

The protein localises to the cytoplasm. It catalyses the reaction ATP + H2O = ADP + phosphate + H(+). Component of the SKI complex which is thought to be involved in exosome-mediated RNA decay and associates with transcriptionally active genes in a manner dependent on PAF1 complex (PAF1C). Involved in the regulation of potassium deprivation stress response. The polypeptide is DExH-box ATP-dependent RNA helicase DExH11 (Arabidopsis thaliana (Mouse-ear cress)).